The primary structure comprises 298 residues: Mitochondrial glycine transporter (298 aa).

Solcar repeat units lie at residues 5–84 (TKTR…MRTA), 105–189 (LTTY…AKEV), and 211–295 (TSTL…LIKL). 6 consecutive transmembrane segments (helical) span residues 11–36 (LIGGFFGGLTSAVALQPLDLLKTRIQ), 59–85 (GTLPSAIRTSLGSALYLSSLNLMRTAI), 111–136 (LISGALARGAVGYMTMPVTVIKVRYE), 164–187 (GFGPTLVRDAPYSGIYVLLYEKAK), 215–241 (VNSTSAILSACLATTITAPFDTIKTRM), and 270–288 (GLSMRLTRKALSAGIAWGI).

It belongs to the mitochondrial carrier (TC 2.A.29) family. SLC25A38 subfamily.

The protein resides in the mitochondrion inner membrane. It catalyses the reaction glycine(in) = glycine(out). Its function is as follows. Mitochondrial glycine transporter that imports glycine into the mitochondrial matrix. Plays an important role in providing glycine for the first enzymatic step in heme biosynthesis, the condensation of glycine with succinyl-CoA to produce 5-aminolevulinate (ALA) in the mitochondrial matrix. The sequence is that of Mitochondrial glycine transporter from Vanderwaltozyma polyspora (strain ATCC 22028 / DSM 70294 / BCRC 21397 / CBS 2163 / NBRC 10782 / NRRL Y-8283 / UCD 57-17) (Kluyveromyces polysporus).